The primary structure comprises 401 residues: MSESAFAERIVHNLLDTDFYKLTMMQGVLHNYPDADVEWEFRCRNGEDLRPYLGEIRNQLERLNDLTLDDGQLPFLERISFLKPDFLRFLRLFRFNLRYVRVGIENDQLFLRLKGPWLHVILFEVPLLAIISEVRNRQLHPHMRLAEARDQLYRKFDWLRAHASDEELAELQVADFGTRRRFSSRVQEEVVRVLRDDFPARFVGTSNVDLAWKLDIKPLGTMAHEWIMAHQQLGPRLIDSQIAALDCWVREYRGLLGIALTDCITMDAFLGDFDLYFAKLFDGLRHDSGEPVAWAEKAIAHYQKLGIDPMTKTLVFSDGLNLTRSLEIFRALRGRINVSFGIGTNLTCDIPGVAPMSIVLKMTDCNGAPVAKISDEAAKTQCRDENFVAYMRHVFKVPSKE.

The residue at position 224 (His-224) is a Phosphohistidine; by autocatalysis.

This sequence belongs to the NAPRTase family. In terms of processing, transiently phosphorylated on a His residue during the reaction cycle. Phosphorylation strongly increases the affinity for substrates and increases the rate of nicotinate D-ribonucleotide production. Dephosphorylation regenerates the low-affinity form of the enzyme, leading to product release.

The enzyme catalyses nicotinate + 5-phospho-alpha-D-ribose 1-diphosphate + ATP + H2O = nicotinate beta-D-ribonucleotide + ADP + phosphate + diphosphate. It functions in the pathway cofactor biosynthesis; NAD(+) biosynthesis; nicotinate D-ribonucleotide from nicotinate: step 1/1. Catalyzes the synthesis of beta-nicotinate D-ribonucleotide from nicotinate and 5-phospho-D-ribose 1-phosphate at the expense of ATP. This chain is Nicotinate phosphoribosyltransferase, found in Pseudomonas putida (strain GB-1).